Reading from the N-terminus, the 115-residue chain is MARAKNGTVHVARRKRILKKTKGFWGTKKSNYKKAKDTLRKGMMYATRDRKARKRDFRRLWISRISAALSDTGISYSRFIEGLLKSNIKINRKILSNLAIEDAEAFKKIVLEIRR.

Belongs to the bacterial ribosomal protein bL20 family.

Functionally, binds directly to 23S ribosomal RNA and is necessary for the in vitro assembly process of the 50S ribosomal subunit. It is not involved in the protein synthesizing functions of that subunit. This is Large ribosomal subunit protein bL20 from Borrelia garinii subsp. bavariensis (strain ATCC BAA-2496 / DSM 23469 / PBi) (Borreliella bavariensis).